The sequence spans 201 residues: Glutathione peroxidase 1 (201 aa).

Phosphoserine is present on residues S7 and S32. The active site involves U47. U47 is a non-standard amino acid (selenocysteine). N6-acetyllysine; alternate is present on residues K62, K86, and K112. N6-succinyllysine; alternate is present on residues K62, K86, and K112. K119 carries the post-translational modification N6-acetyllysine. K146 carries the N6-acetyllysine; alternate modification. K146 carries the N6-succinyllysine; alternate modification. S195 carries the post-translational modification Phosphoserine.

Belongs to the glutathione peroxidase family. As to quaternary structure, homotetramer. Interacts with MIEN1. During periods of oxidative stress, Sec-47 may react with a superoxide radical, irreversibly lose hydroselenide and be converted to dehydroalanine. As to expression, expressed in liver, kidney, lung, brain and heart.

It localises to the cytoplasm. Its subcellular location is the mitochondrion. The catalysed reaction is 2 glutathione + H2O2 = glutathione disulfide + 2 H2O. The enzyme catalyses a hydroperoxy polyunsaturated fatty acid + 2 glutathione = a hydroxy polyunsaturated fatty acid + glutathione disulfide + H2O. It carries out the reaction tert-butyl hydroperoxide + 2 glutathione = tert-butanol + glutathione disulfide + H2O. It catalyses the reaction cumene hydroperoxide + 2 glutathione = 2-phenylpropan-2-ol + glutathione disulfide + H2O. The catalysed reaction is (13S)-hydroperoxy-(9Z,11E)-octadecadienoate + 2 glutathione = (13S)-hydroxy-(9Z,11E)-octadecadienoate + glutathione disulfide + H2O. The enzyme catalyses (9S)-hydroperoxy-(10E,12Z)-octadecadienoate + 2 glutathione = (9S)-hydroxy-(10E,12Z)-octadecadienoate + glutathione disulfide + H2O. It carries out the reaction (5S)-hydroperoxy-(6E,8Z,11Z,14Z)-eicosatetraenoate + 2 glutathione = (5S)-hydroxy-(6E,8Z,11Z,14Z)-eicosatetraenoate + glutathione disulfide + H2O. It catalyses the reaction (12S)-hydroperoxy-(5Z,8Z,10E,14Z)-eicosatetraenoate + 2 glutathione = (12S)-hydroxy-(5Z,8Z,10E,14Z)-eicosatetraenoate + glutathione disulfide + H2O. The catalysed reaction is (12R)-hydroperoxy-(5Z,8Z,10E,14Z)-eicosatetraenoate + 2 glutathione = (12R)-hydroxy-(5Z,8Z,10E,14Z)-eicosatetraenoate + glutathione disulfide + H2O. The enzyme catalyses (15S)-hydroperoxy-(5Z,8Z,11Z,13E)-eicosatetraenoate + 2 glutathione = (15S)-hydroxy-(5Z,8Z,11Z,13E)-eicosatetraenoate + glutathione disulfide + H2O. It carries out the reaction (5S)-hydroperoxy-(6E,8Z,11Z,14Z,17Z)-eicosapentaenoate + 2 glutathione = (5S)-hydroxy-(6E,8Z,11Z,14Z,17Z)-eicosapentaenoate + glutathione disulfide + H2O. It catalyses the reaction (12S)-hydroperoxy-(5Z,8Z,10E,14Z,17Z)-eicosapentaenoate + 2 glutathione = (12S)-hydroxy-(5Z,8Z,10E,14Z,17Z)-eicosapentaenoate + glutathione disulfide + H2O. The catalysed reaction is (15S)-hydroperoxy-(5Z,8Z,11Z,13E,17Z)-eicosapentaenoate + 2 glutathione = (15S)-hydroxy-(5Z,8Z,11Z,13E,17Z)-eicosapentaenoate + glutathione disulfide + H2O. The enzyme catalyses (15S)-hydroperoxy-(11Z,13E)-eicosadienoate + 2 glutathione = (15S)-hydroxy-(11Z,13E)-eicosadienoate + glutathione disulfide + H2O. It carries out the reaction (17S)-hydroperoxy-(4Z,7Z,10Z,13Z,15E,19Z)-docosahexaenoate + 2 glutathione = (17S)-hydroxy-(4Z,7Z,10Z,13Z,15E,19Z)-docosahexaenoate + glutathione disulfide + H2O. Functionally, catalyzes the reduction of hydroperoxides in a glutathione-dependent manner thus regulating cellular redox homeostasis. Can reduce small soluble hydroperoxides such as H2O2, cumene hydroperoxide and tert-butyl hydroperoxide, as well as several fatty acid-derived hydroperoxides. In platelets catalyzes the reduction of 12-hydroperoxyeicosatetraenoic acid, the primary product of the arachidonate 12-lipoxygenase pathway. This Mus musculus (Mouse) protein is Glutathione peroxidase 1.